The sequence spans 233 residues: Glutathione S-transferase 2 (233 aa).

Positions Gln-17 to Thr-101 constitute a GST N-terminal domain. Glutathione-binding positions include Tyr-29, His-58, Val-72, Glu-85–Cys-86, and His-133. In terms of domain architecture, GST C-terminal spans Thr-106–Ser-233.

It belongs to the GST superfamily. As to quaternary structure, homodimer.

It carries out the reaction RX + glutathione = an S-substituted glutathione + a halide anion + H(+). The polypeptide is Glutathione S-transferase 2 (GTT2) (Saccharomyces cerevisiae (strain ATCC 204508 / S288c) (Baker's yeast)).